We begin with the raw amino-acid sequence, 74 residues long: Small ribosomal subunit protein eS28 (74 aa).

Belongs to the eukaryotic ribosomal protein eS28 family.

This chain is Small ribosomal subunit protein eS28, found in Halorubrum lacusprofundi (strain ATCC 49239 / DSM 5036 / JCM 8891 / ACAM 34).